A 67-amino-acid polypeptide reads, in one-letter code: Brevinin-1CDYc (67 aa).

The N-terminal stretch at 1–22 is a signal peptide; that stretch reads MFTLKKSLLLIFFLGTINLSLC. A propeptide spanning residues 23–45 is cleaved from the precursor; it reads EEERNADEEERRDDPEERDVEVE. A disulfide bridge connects residues C61 and C67.

The protein belongs to the frog skin active peptide (FSAP) family. Brevinin subfamily. Expressed by the skin glands.

The protein resides in the secreted. Antimicrobial peptide. The protein is Brevinin-1CDYc of Rana huanrensis (Huanren frog).